Consider the following 474-residue polypeptide: Glutamate--tRNA ligase 2 (474 aa).

The short motif at 16 to 26 is the 'HIGH' region element; sequence PSPTGFLHIGG. Positions 245–249 match the 'KMSKS' region motif; that stretch reads KLSKR. Lysine 248 provides a ligand contact to ATP.

The protein belongs to the class-I aminoacyl-tRNA synthetase family. Glutamate--tRNA ligase type 1 subfamily. Monomer.

Its subcellular location is the cytoplasm. It carries out the reaction tRNA(Glu) + L-glutamate + ATP = L-glutamyl-tRNA(Glu) + AMP + diphosphate. Catalyzes the attachment of glutamate to tRNA(Glu) in a two-step reaction: glutamate is first activated by ATP to form Glu-AMP and then transferred to the acceptor end of tRNA(Glu). The polypeptide is Glutamate--tRNA ligase 2 (Rhizorhabdus wittichii (strain DSM 6014 / CCUG 31198 / JCM 15750 / NBRC 105917 / EY 4224 / RW1) (Sphingomonas wittichii)).